A 235-amino-acid polypeptide reads, in one-letter code: Ribonuclease PH (235 aa).

Phosphate-binding positions include Arg-86 and 124 to 126 (GTR).

This sequence belongs to the RNase PH family. In terms of assembly, homohexameric ring arranged as a trimer of dimers.

The catalysed reaction is tRNA(n+1) + phosphate = tRNA(n) + a ribonucleoside 5'-diphosphate. Functionally, phosphorolytic 3'-5' exoribonuclease that plays an important role in tRNA 3'-end maturation. Removes nucleotide residues following the 3'-CCA terminus of tRNAs; can also add nucleotides to the ends of RNA molecules by using nucleoside diphosphates as substrates, but this may not be physiologically important. Probably plays a role in initiation of 16S rRNA degradation (leading to ribosome degradation) during starvation. This Legionella pneumophila (strain Paris) protein is Ribonuclease PH.